A 242-amino-acid polypeptide reads, in one-letter code: Ribonuclease PH (242 aa).

Residues arginine 86 and 124 to 126 (GTR) contribute to the phosphate site.

The protein belongs to the RNase PH family. In terms of assembly, homohexameric ring arranged as a trimer of dimers.

It carries out the reaction tRNA(n+1) + phosphate = tRNA(n) + a ribonucleoside 5'-diphosphate. Functionally, phosphorolytic 3'-5' exoribonuclease that plays an important role in tRNA 3'-end maturation. Removes nucleotide residues following the 3'-CCA terminus of tRNAs; can also add nucleotides to the ends of RNA molecules by using nucleoside diphosphates as substrates, but this may not be physiologically important. Probably plays a role in initiation of 16S rRNA degradation (leading to ribosome degradation) during starvation. In Photorhabdus laumondii subsp. laumondii (strain DSM 15139 / CIP 105565 / TT01) (Photorhabdus luminescens subsp. laumondii), this protein is Ribonuclease PH.